The following is a 130-amino-acid chain: Nascent polypeptide-associated complex protein (130 aa).

The NAC-A/B domain maps to 8–75 (PKMMRQMQKM…AKNIKKDDIK (68 aa)).

The protein belongs to the NAC-alpha family. In terms of assembly, homodimer. Interacts with the ribosome. Binds ribosomal RNA.

Its function is as follows. Contacts the emerging nascent chain on the ribosome. This chain is Nascent polypeptide-associated complex protein, found in Methanococcus aeolicus (strain ATCC BAA-1280 / DSM 17508 / OCM 812 / Nankai-3).